The chain runs to 118 residues: MPFVELDTSLPAGRVPAGLEKRLCAATAAILSKPEDRVNVTVRSGLAMVVNGSAEPSAQLLVSSIGVVGTAEENRGHSARFFEFLTKELDLAEDRIMIRFFPLERWQIGKKGTVMTFL.

Pro-2 is subject to N-acetylproline. At Lys-33 the chain carries N6-acetyllysine.

This sequence belongs to the MIF family. In terms of assembly, homotrimer.

Its subcellular location is the cytoplasm. It carries out the reaction D-dopachrome + H(+) = 5,6-dihydroxyindole + CO2. Tautomerization of D-dopachrome with decarboxylation to give 5,6-dihydroxyindole (DHI). This Bos taurus (Bovine) protein is D-dopachrome decarboxylase (DDT).